We begin with the raw amino-acid sequence, 782 residues long: Endonuclease MutS2 (782 aa).

Residue 336–343 participates in ATP binding; that stretch reads GPNTGGKT. One can recognise a Smr domain in the interval 707–782; the sequence is LDLRGYRYED…GFGVTVATLK (76 aa).

The protein belongs to the DNA mismatch repair MutS family. MutS2 subfamily. As to quaternary structure, homodimer. Binds to stalled ribosomes, contacting rRNA.

Endonuclease that is involved in the suppression of homologous recombination and thus may have a key role in the control of bacterial genetic diversity. In terms of biological role, acts as a ribosome collision sensor, splitting the ribosome into its 2 subunits. Detects stalled/collided 70S ribosomes which it binds and splits by an ATP-hydrolysis driven conformational change. Acts upstream of the ribosome quality control system (RQC), a ribosome-associated complex that mediates the extraction of incompletely synthesized nascent chains from stalled ribosomes and their subsequent degradation. Probably generates substrates for RQC. The sequence is that of Endonuclease MutS2 from Staphylococcus aureus (strain JH1).